The sequence spans 31 residues: Dermaseptin-7.2TR (31 aa).

Glutamic acid 1-amide is present on Glu-31.

As to expression, expressed by the skin glands.

The protein resides in the secreted. Functionally, has antimicrobial activity. This is Dermaseptin-7.2TR from Phyllomedusa trinitatis (Trinidad leaf frog).